The chain runs to 55 residues: Large ribosomal subunit protein bL33 (55 aa).

Belongs to the bacterial ribosomal protein bL33 family.

The chain is Large ribosomal subunit protein bL33 from Beijerinckia indica subsp. indica (strain ATCC 9039 / DSM 1715 / NCIMB 8712).